The chain runs to 321 residues: DNA-directed RNA polymerase subunit alpha (321 aa).

The segment at Met1–Pro235 is alpha N-terminal domain (alpha-NTD). The segment at Gln252–Asn321 is alpha C-terminal domain (alpha-CTD).

It belongs to the RNA polymerase alpha chain family. As to quaternary structure, homodimer. In cyanobacteria the RNAP catalytic core is composed of 2 alpha, 1 beta, 1 beta', 1 gamma and 1 omega subunit. When a sigma factor is associated with the core the holoenzyme is formed, which can initiate transcription.

It catalyses the reaction RNA(n) + a ribonucleoside 5'-triphosphate = RNA(n+1) + diphosphate. DNA-dependent RNA polymerase catalyzes the transcription of DNA into RNA using the four ribonucleoside triphosphates as substrates. In Thermosynechococcus vestitus (strain NIES-2133 / IAM M-273 / BP-1), this protein is DNA-directed RNA polymerase subunit alpha.